A 417-amino-acid chain; its full sequence is Exodeoxyribonuclease 7 large subunit (417 aa).

Belongs to the XseA family. In terms of assembly, heterooligomer composed of large and small subunits.

The protein localises to the cytoplasm. It catalyses the reaction Exonucleolytic cleavage in either 5'- to 3'- or 3'- to 5'-direction to yield nucleoside 5'-phosphates.. Functionally, bidirectionally degrades single-stranded DNA into large acid-insoluble oligonucleotides, which are then degraded further into small acid-soluble oligonucleotides. The sequence is that of Exodeoxyribonuclease 7 large subunit from Lactococcus lactis subsp. lactis (strain IL1403) (Streptococcus lactis).